A 314-amino-acid chain; its full sequence is 2,3-dihydroxyphenylpropionate/2,3-dihydroxicinnamic acid 1,2-dioxygenase (314 aa).

H115 acts as the Proton donor in catalysis. The Proton acceptor role is filled by H179.

This sequence belongs to the LigB/MhpB extradiol dioxygenase family. In terms of assembly, homotetramer. It depends on Fe(2+) as a cofactor.

The enzyme catalyses 3-(2,3-dihydroxyphenyl)propanoate + O2 = (2Z,4E)-2-hydroxy-6-oxonona-2,4-dienedioate + H(+). The catalysed reaction is (2E)-3-(2,3-dihydroxyphenyl)prop-2-enoate + O2 = (2Z,4E,7E)-2-hydroxy-6-oxonona-2,4,7-trienedioate + H(+). It functions in the pathway aromatic compound metabolism; 3-phenylpropanoate degradation. Catalyzes the non-heme iron(II)-dependent oxidative cleavage of 2,3-dihydroxyphenylpropionic acid and 2,3-dihydroxicinnamic acid into 2-hydroxy-6-ketononadienedioate and 2-hydroxy-6-ketononatrienedioate, respectively. This Rhodococcus globerulus protein is 2,3-dihydroxyphenylpropionate/2,3-dihydroxicinnamic acid 1,2-dioxygenase.